We begin with the raw amino-acid sequence, 112 residues long: Nucleoid-associated protein FTH_1374 (112 aa).

Residues 1–27 form a disordered region; the sequence is MNFDMSKLMQQAQKMQEQMKKAQQERE. The span at 17-27 shows a compositional bias: basic and acidic residues; sequence EQMKKAQQERE.

Belongs to the YbaB/EbfC family. Homodimer.

The protein resides in the cytoplasm. The protein localises to the nucleoid. Functionally, binds to DNA and alters its conformation. May be involved in regulation of gene expression, nucleoid organization and DNA protection. The protein is Nucleoid-associated protein FTH_1374 of Francisella tularensis subsp. holarctica (strain OSU18).